The sequence spans 81 residues: MPQSKQQFKRQGARQRDSKGKFVKARTGMATAPPAAVSTAAPTASTMTPTGSSTTATIGGATTGASTTTAVTGCGCNCCSH.

Residues 1 to 58 (MPQSKQQFKRQGARQRDSKGKFVKARTGMATAPPAAVSTAAPTASTMTPTGSSTTATI) are disordered. Positions 30-58 (ATAPPAAVSTAAPTASTMTPTGSSTTATI) are enriched in low complexity.

This is an uncharacterized protein from Caenorhabditis elegans.